The primary structure comprises 185 residues: Peptide deformylase (185 aa).

Fe cation-binding residues include Cys94 and His136. Glu137 is an active-site residue. His140 serves as a coordination point for Fe cation.

The protein belongs to the polypeptide deformylase family. Requires Fe(2+) as cofactor.

It carries out the reaction N-terminal N-formyl-L-methionyl-[peptide] + H2O = N-terminal L-methionyl-[peptide] + formate. Functionally, removes the formyl group from the N-terminal Met of newly synthesized proteins. Requires at least a dipeptide for an efficient rate of reaction. N-terminal L-methionine is a prerequisite for activity but the enzyme has broad specificity at other positions. This Chlorobium limicola (strain DSM 245 / NBRC 103803 / 6330) protein is Peptide deformylase.